The chain runs to 223 residues: Protein phosphatase 1 regulatory subunit 3C (223 aa).

A CBM21 domain is found at 104 to 209 (REQLTRKLVC…NNDGKNYSLH (106 aa)).

As to quaternary structure, interacts with PPP1CC catalytic subunit of PP1 and associates with glycogen. Forms complexes with glycogen phosphorylase, glycogen synthase and phosphorylase kinase which is necessary for its regulation of PP1 activity.

Its function is as follows. Acts as a glycogen-targeting subunit for PP1 and regulates its activity. Activates glycogen synthase, reduces glycogen phosphorylase activity and limits glycogen breakdown. This is Protein phosphatase 1 regulatory subunit 3C from Xenopus tropicalis (Western clawed frog).